Reading from the N-terminus, the 852-residue chain is Gamma-tubulin complex component 2 homolog (852 aa).

Position 73 is a phosphoserine (Ser-73).

This sequence belongs to the TUBGCP family. As to quaternary structure, gamma-tubulin small complex (Gamma TuSC) is a heterotetrameric complex which contains two molecules of gamma-tubulin, and one molecule each of Dgrip84 and Dgrip91. The gamma-tubulin in this complex binds preferentially to GDP over GTP.

It is found in the cytoplasm. It localises to the cytoskeleton. The protein resides in the microtubule organizing center. The protein localises to the centrosome. Its subcellular location is the perinuclear region. This Drosophila melanogaster (Fruit fly) protein is Gamma-tubulin complex component 2 homolog (Grip84).